The chain runs to 553 residues: CTP synthase (553 aa).

The amidoligase domain stretch occupies residues 1–270; it reads MTKYVFVTGG…DDLICRELEL (270 aa). Serine 13 contacts CTP. Serine 13 is a UTP binding site. ATP is bound by residues 14–19 and aspartate 71; that span reads SLGKGI. The Mg(2+) site is built by aspartate 71 and glutamate 144. CTP-binding positions include 151–153, 191–196, and lysine 227; these read DIE and KTKPTQ. Residues 191 to 196 and lysine 227 each bind UTP; that span reads KTKPTQ. Positions 295–547 constitute a Glutamine amidotransferase type-1 domain; the sequence is TIGMVGKYVE…IKAALIHQDA (253 aa). Residue glycine 356 coordinates L-glutamine. Cysteine 383 functions as the Nucleophile; for glutamine hydrolysis in the catalytic mechanism. L-glutamine-binding positions include 384-387, glutamate 407, and arginine 473; that span reads LGMQ. Catalysis depends on residues histidine 520 and glutamate 522.

It belongs to the CTP synthase family. In terms of assembly, homotetramer.

It catalyses the reaction UTP + L-glutamine + ATP + H2O = CTP + L-glutamate + ADP + phosphate + 2 H(+). The enzyme catalyses L-glutamine + H2O = L-glutamate + NH4(+). It carries out the reaction UTP + NH4(+) + ATP = CTP + ADP + phosphate + 2 H(+). It participates in pyrimidine metabolism; CTP biosynthesis via de novo pathway; CTP from UDP: step 2/2. With respect to regulation, allosterically activated by GTP, when glutamine is the substrate; GTP has no effect on the reaction when ammonia is the substrate. The allosteric effector GTP functions by stabilizing the protein conformation that binds the tetrahedral intermediate(s) formed during glutamine hydrolysis. Inhibited by the product CTP, via allosteric rather than competitive inhibition. Its function is as follows. Catalyzes the ATP-dependent amination of UTP to CTP with either L-glutamine or ammonia as the source of nitrogen. Regulates intracellular CTP levels through interactions with the four ribonucleotide triphosphates. This chain is CTP synthase, found in Polynucleobacter asymbioticus (strain DSM 18221 / CIP 109841 / QLW-P1DMWA-1) (Polynucleobacter necessarius subsp. asymbioticus).